A 90-amino-acid polypeptide reads, in one-letter code: Small ribosomal subunit protein bS16 (90 aa).

This sequence belongs to the bacterial ribosomal protein bS16 family.

The protein is Small ribosomal subunit protein bS16 of Lactococcus lactis subsp. cremoris (strain MG1363).